Consider the following 347-residue polypeptide: NADH-ubiquinone oxidoreductase chain 2 (347 aa).

The next 10 membrane-spanning stretches (helical) occupy residues 1 to 21 (MNPIIFFMIMLTIILGTTIVM), 25 to 45 (HWLTVWMGFEMNMLAIIPMLM), 59 to 79 (YFLTQATASMLLLLAITINLM), 96 to 116 (IILTIALAMKLGLAPFHFWVP), 148 to 168 (IINLDLLLMMGLLSVMIGGWG), 178 to 198 (IMAYSSIAHMGWMVTILIYNP), 200 to 220 (LTMLNLTIYIMMTLTMFMLLI), 237 to 257 (MPLITTMMLTTLLSMGGLPPL), 274 to 294 (NSIILPTFMAITALLNLYFYM), and 326 to 346 (LSPLMVISTMTLPLTPMMMIL).

Belongs to the complex I subunit 2 family. Core subunit of respiratory chain NADH dehydrogenase (Complex I) which is composed of 45 different subunits. Interacts with TMEM242.

Its subcellular location is the mitochondrion inner membrane. The catalysed reaction is a ubiquinone + NADH + 5 H(+)(in) = a ubiquinol + NAD(+) + 4 H(+)(out). Core subunit of the mitochondrial membrane respiratory chain NADH dehydrogenase (Complex I) which catalyzes electron transfer from NADH through the respiratory chain, using ubiquinone as an electron acceptor. Essential for the catalytic activity and assembly of complex I. This is NADH-ubiquinone oxidoreductase chain 2 from Gardnerycteris crenulata (Striped hairy-nosed bat).